The sequence spans 465 residues: GTPase Der (465 aa).

EngA-type G domains are found at residues 3–167 (PLVA…PERG) and 179–352 (IHIA…VSAL). GTP is bound by residues 9-16 (GRPNVGKS), 57-61 (DTGGM), 119-122 (NKID), 185-192 (GRPNVGKS), 232-236 (DTAGL), and 297-300 (NKWD). Positions 353 to 437 (RQFSTSEVNK…PVRFLFREGD (85 aa)) constitute a KH-like domain.

The protein belongs to the TRAFAC class TrmE-Era-EngA-EngB-Septin-like GTPase superfamily. EngA (Der) GTPase family. In terms of assembly, associates with the 50S ribosomal subunit.

Functionally, GTPase that plays an essential role in the late steps of ribosome biogenesis. This chain is GTPase Der, found in Xylella fastidiosa (strain 9a5c).